The chain runs to 248 residues: Segregation and condensation protein A (248 aa).

Belongs to the ScpA family. Component of a cohesin-like complex composed of ScpA, ScpB and the Smc homodimer, in which ScpA and ScpB bind to the head domain of Smc. The presence of the three proteins is required for the association of the complex with DNA.

The protein resides in the cytoplasm. In terms of biological role, participates in chromosomal partition during cell division. May act via the formation of a condensin-like complex containing Smc and ScpB that pull DNA away from mid-cell into both cell halves. The polypeptide is Segregation and condensation protein A (Clostridium perfringens (strain SM101 / Type A)).